Consider the following 406-residue polypeptide: RILP-like protein 1 (406 aa).

Position 7 is a phosphoserine (S7). The region spanning 10 to 97 (AALSALEKNV…RVERMDRIEK (88 aa)) is the RH1 domain. S-nitrosocysteine is present on C47. Residues 76-258 (ELDELRLELD…KLRERLQGEH (183 aa)) are a coiled coil. Disordered stretches follow at residues 255 to 280 (QGEHSQNGEEEEAEIPPQPDGEESIS) and 330 to 354 (EIEEENRIPQPPPITHPRTSPQPES). At S259 the chain carries Phosphoserine. Acidic residues predominate over residues 262 to 280 (GEEEEAEIPPQPDGEESIS). The region spanning 294 to 359 (RPRFTLQELR…PQPESGIKRL (66 aa)) is the RH2 domain.

Belongs to the RILPL family. In terms of assembly, interacts (when S-nitrosylated) with GAPDH. Interacts with RAB8A; interaction is dependent on the phosphorylation of 'Thr-72' of RAB8A. Interacts with RAB10 and RAB12; the interaction is dependent on the phosphorylation of 'Thr-73' of RAB10, and 'Ser-105' of RAB12. S-nitrosylation is required for the interaction with GAPDH. Highly expressed in heart, skeletal muscle, brain and lung (at protein level).

The protein resides in the cytoplasm. Its subcellular location is the cytosol. It localises to the cytoskeleton. It is found in the microtubule organizing center. The protein localises to the centrosome. The protein resides in the centriole. Its subcellular location is the cilium basal body. Its function is as follows. Plays a role in the regulation of cell shape and polarity. Plays a role in cellular protein transport, including protein transport away from primary cilia. Neuroprotective protein, which acts by sequestring GAPDH in the cytosol and prevent the apoptotic function of GAPDH in the nucleus. Competes with SIAH1 for binding GAPDH. Does not regulate lysosomal morphology and distribution. Binds to RAB10 following LRRK2-mediated RAB10 phosphorylation which leads to inhibition of ciliogenesis. This chain is RILP-like protein 1 (Rilpl1), found in Rattus norvegicus (Rat).